The primary structure comprises 142 residues: Large ribosomal subunit protein uL13 (142 aa).

It belongs to the universal ribosomal protein uL13 family. As to quaternary structure, part of the 50S ribosomal subunit.

Its function is as follows. This protein is one of the early assembly proteins of the 50S ribosomal subunit, although it is not seen to bind rRNA by itself. It is important during the early stages of 50S assembly. The sequence is that of Large ribosomal subunit protein uL13 from Trichlorobacter lovleyi (strain ATCC BAA-1151 / DSM 17278 / SZ) (Geobacter lovleyi).